The primary structure comprises 330 residues: Ketol-acid reductoisomerase (NADP(+)) (330 aa).

Residues 1–181 form the KARI N-terminal Rossmann domain; sequence MKVYYEQDAT…GGARSGVIET (181 aa). NADP(+) contacts are provided by residues 24 to 27, Arg-47, and 82 to 85; these read YGSQ and DQVQ. His-107 is a catalytic residue. Gly-133 contributes to the NADP(+) binding site. Residues 182–327 form the KARI C-terminal knotted domain; sequence TFKEETETDL…GKLRGMMPWL (146 aa). Mg(2+)-binding residues include Asp-190, Glu-194, Glu-226, and Glu-230. Ser-251 is a substrate binding site.

This sequence belongs to the ketol-acid reductoisomerase family. Requires Mg(2+) as cofactor.

It carries out the reaction (2R)-2,3-dihydroxy-3-methylbutanoate + NADP(+) = (2S)-2-acetolactate + NADPH + H(+). The enzyme catalyses (2R,3R)-2,3-dihydroxy-3-methylpentanoate + NADP(+) = (S)-2-ethyl-2-hydroxy-3-oxobutanoate + NADPH + H(+). It functions in the pathway amino-acid biosynthesis; L-isoleucine biosynthesis; L-isoleucine from 2-oxobutanoate: step 2/4. The protein operates within amino-acid biosynthesis; L-valine biosynthesis; L-valine from pyruvate: step 2/4. Involved in the biosynthesis of branched-chain amino acids (BCAA). Catalyzes an alkyl-migration followed by a ketol-acid reduction of (S)-2-acetolactate (S2AL) to yield (R)-2,3-dihydroxy-isovalerate. In the isomerase reaction, S2AL is rearranged via a Mg-dependent methyl migration to produce 3-hydroxy-3-methyl-2-ketobutyrate (HMKB). In the reductase reaction, this 2-ketoacid undergoes a metal-dependent reduction by NADPH to yield (R)-2,3-dihydroxy-isovalerate. The protein is Ketol-acid reductoisomerase (NADP(+)) of Nitratidesulfovibrio vulgaris (strain DSM 19637 / Miyazaki F) (Desulfovibrio vulgaris).